The sequence spans 417 residues: Glutamate-1-semialdehyde 2,1-aminomutase (417 aa).

Lys263 is subject to N6-(pyridoxal phosphate)lysine.

It belongs to the class-III pyridoxal-phosphate-dependent aminotransferase family. HemL subfamily. The cofactor is pyridoxal 5'-phosphate.

The protein localises to the cytoplasm. The enzyme catalyses (S)-4-amino-5-oxopentanoate = 5-aminolevulinate. Its pathway is porphyrin-containing compound metabolism; protoporphyrin-IX biosynthesis; 5-aminolevulinate from L-glutamyl-tRNA(Glu): step 2/2. This Methanospirillum hungatei JF-1 (strain ATCC 27890 / DSM 864 / NBRC 100397 / JF-1) protein is Glutamate-1-semialdehyde 2,1-aminomutase.